The sequence spans 131 residues: MTAANQNYGTGRRKSSSARVFIKPGNGKITINQRSLEVYFGRETSRMIVRQPLELVELTDKLDLYITVKGGGISGQAGAIRHGITRALMEYDESLRPALRAAGFVTRDARRVERKKVGLHKARRRPQYSKR.

It belongs to the universal ribosomal protein uS9 family.

The protein is Small ribosomal subunit protein uS9 of Actinobacillus succinogenes (strain ATCC 55618 / DSM 22257 / CCUG 43843 / 130Z).